The sequence spans 205 residues: Ribosomal RNA large subunit methyltransferase E (205 aa).

The S-adenosyl-L-methionine site is built by glycine 50, tryptophan 52, aspartate 67, asparagine 83, and aspartate 111. Lysine 151 (proton acceptor) is an active-site residue.

The protein belongs to the class I-like SAM-binding methyltransferase superfamily. RNA methyltransferase RlmE family.

Its subcellular location is the cytoplasm. It carries out the reaction uridine(2552) in 23S rRNA + S-adenosyl-L-methionine = 2'-O-methyluridine(2552) in 23S rRNA + S-adenosyl-L-homocysteine + H(+). Specifically methylates the uridine in position 2552 of 23S rRNA at the 2'-O position of the ribose in the fully assembled 50S ribosomal subunit. The protein is Ribosomal RNA large subunit methyltransferase E of Thermoplasma acidophilum (strain ATCC 25905 / DSM 1728 / JCM 9062 / NBRC 15155 / AMRC-C165).